The primary structure comprises 107 residues: Multidrug resistance protein mmr (107 aa).

The next 4 membrane-spanning stretches (helical) occupy residues 2–19, 29–51, 58–77, and 82–104; these read AYLFLFCAIFVEVVATTL, LVPTLACLAGYAVTFTLLALSIS, VAYALWSAIGTAAIVLIAVL, and PVSVAKVVGVALIIVGVITLNLA.

It belongs to the drug/metabolite transporter (DMT) superfamily. Small multidrug resistance (SMR) (TC 2.A.7.1) family. Mmr subfamily.

Its subcellular location is the cell membrane. Its function is as follows. Multidrug efflux pump. Confers resistance to tetraphenylphosphonium (TPP), erythromycin, ethidium bromide, acriflavine, safranin O and pyronin Y. The polypeptide is Multidrug resistance protein mmr (mmr) (Mycobacterium leprae (strain TN)).